The following is a 195-amino-acid chain: MADPSAKQTGQKSVKIAAGAVVCVESDIRGDVTIGARTVVHPKARIIAEAGPIVIGEGNLIEEQALIINSFPENLLPNTDDVEPKPMIIGVNNVFEVGCVCQALKIGDNNVIESKADVGRSVMLTSGCIVGSCCQIHTCEVIPENTVIYGSECLRRVQTERPQPQTLQLDFLMKILPNYHHLKKTVKSSGTPARS.

It belongs to the dynactin subunits 5/6 family. Dynactin subunit 6 subfamily. Member of the pointed-end complex of the dynactin shoulder complex which contains dctn4, dctn5 and dctn6 subunits and Actr10. Within the complex dctn6 forms a heterodimer with dctn5. Interacts with plk1.

Its subcellular location is the cytoplasm. The protein resides in the cytoskeleton. The protein localises to the chromosome. It localises to the centromere. It is found in the kinetochore. Functionally, part of the dynactin complex that activates the molecular motor dynein for ultra-processive transport along microtubules. The chain is Dynactin subunit 6 (dctn6) from Danio rerio (Zebrafish).